We begin with the raw amino-acid sequence, 252 residues long: Hydroxyacylglutathione hydrolase (252 aa).

Zn(2+)-binding residues include histidine 54, histidine 56, aspartate 58, histidine 59, histidine 111, aspartate 130, and histidine 170.

It belongs to the metallo-beta-lactamase superfamily. Glyoxalase II family. In terms of assembly, monomer. The cofactor is Zn(2+).

The catalysed reaction is an S-(2-hydroxyacyl)glutathione + H2O = a 2-hydroxy carboxylate + glutathione + H(+). It participates in secondary metabolite metabolism; methylglyoxal degradation; (R)-lactate from methylglyoxal: step 2/2. Functionally, thiolesterase that catalyzes the hydrolysis of S-D-lactoyl-glutathione to form glutathione and D-lactic acid. The chain is Hydroxyacylglutathione hydrolase from Francisella tularensis subsp. novicida (strain U112).